The following is an 89-amino-acid chain: Small ribosomal subunit protein uS15 (89 aa).

It belongs to the universal ribosomal protein uS15 family. In terms of assembly, part of the 30S ribosomal subunit. Forms a bridge to the 50S subunit in the 70S ribosome, contacting the 23S rRNA.

Functionally, one of the primary rRNA binding proteins, it binds directly to 16S rRNA where it helps nucleate assembly of the platform of the 30S subunit by binding and bridging several RNA helices of the 16S rRNA. Forms an intersubunit bridge (bridge B4) with the 23S rRNA of the 50S subunit in the ribosome. The sequence is that of Small ribosomal subunit protein uS15 from Gluconobacter oxydans (strain 621H) (Gluconobacter suboxydans).